The following is a 532-amino-acid chain: Pentatricopeptide repeat-containing protein At4g02820, mitochondrial (532 aa).

Residues 1–28 (MNKNMLVRSARPTLASIHRLFSAAAAAT) constitute a mitochondrion transit peptide. Positions 35–56 (PVVKPRSGGGKGGESANKKETV) are disordered. 10 PPR repeats span residues 161 to 195 (GHAA…GFLK), 196 to 226 (SCLP…LKIR), 230 to 264 (DIVT…KLNP), 265 to 295 (DWVT…MEKL), 300 to 330 (NRVA…VKSS), 335 to 365 (NDAE…WESV), 370 to 404 (DARI…GINP), 405 to 435 (SYST…AIDS), 442 to 472 (NVRL…LQKA), and 476 to 512 (NTQL…DEET).

It belongs to the PPR family. P subfamily.

The protein localises to the mitochondrion. The chain is Pentatricopeptide repeat-containing protein At4g02820, mitochondrial from Arabidopsis thaliana (Mouse-ear cress).